The sequence spans 797 residues: MAP/microtubule affinity-regulating kinase 3 (797 aa).

Residues 1–35 are disordered; sequence MSTRTPLPTVNERDTENHISHGDGRQEVTSRTGRS. Over residues 11–28 the composition is skewed to basic and acidic residues; the sequence is NERDTENHISHGDGRQEV. Ser42 carries the post-translational modification Phosphoserine. The Protein kinase domain maps to 56-307; sequence YRLLKTIGKG…LEQIMKDRWI (252 aa). ATP contacts are provided by residues 62 to 70 and Lys85; that span reads IGKGNFAKV. Asp178 functions as the Proton acceptor in the catalytic mechanism. Thr211 carries the phosphothreonine; by LKB1 modification. In terms of domain architecture, UBA spans 326–365; that stretch reads ISDQKRIDIMVGMGYSQEEIQESLSKMKYDEITATYLLLG. Ser368, Ser374, Ser376, Ser380, Ser383, Ser400, Ser419, and Ser469 each carry phosphoserine. Disordered regions lie at residues 372 to 504 and 585 to 701; these read DASD…GMTR and PDQR…KPRS. Residues 374 to 385 show a composition bias toward low complexity; the sequence is SDSSSSSNLSLA. Residues 391–400 show a composition bias toward polar residues; that stretch reads SDLSNSTGQS. Polar residues-rich tracts occupy residues 492 to 504 and 585 to 602; these read VPSS…GMTR and PDQR…SATT. Phosphoserine is present on residues Ser593 and Ser596. A Phosphothreonine modification is found at Thr602. Thr617 is modified (phosphothreonine; by PKC/PRKCZ). Ser636, Ser651, and Ser654 each carry phosphoserine. Positions 637–664 are enriched in polar residues; it reads PSLSHEATPLSQTRSRGSTNLFSKLTSK. The span at 669-678 shows a compositional bias: basic and acidic residues; sequence LPTEYERNGR. Ser687 is subject to Phosphoserine. The span at 689-699 shows a compositional bias: basic and acidic residues; the sequence is EQKDENREAKP. In terms of domain architecture, KA1 spans 748–797; that stretch reads DGHAESLVQWEMEVCKLPRLSLNGVRFKRISGTSIAFKNIASKIANELKL.

This sequence belongs to the protein kinase superfamily. CAMK Ser/Thr protein kinase family. SNF1 subfamily. In terms of assembly, interacts with MAPT/TAU. Interacts with DLG5 (via coiled-coil domain). Interacts with STK3/MST2 and STK4/MST1 in the presence of DLG5. Interacts with YWHAB, YWHAG, YWHAQ and YWHAZ. Interacts with PKP2 (via N-terminus). Interacts with CDC25C. Interacts with KSR1. In terms of processing, phosphorylated at Thr-211 by STK11/LKB1 in complex with STE20-related adapter-alpha (STRADA) pseudo kinase and CAB39. Phosphorylation at Thr-617 by PRKCZ/aPKC inhibits the kinase activity.

It localises to the cell membrane. Its subcellular location is the cell projection. The protein resides in the dendrite. It is found in the cytoplasm. It catalyses the reaction L-seryl-[protein] + ATP = O-phospho-L-seryl-[protein] + ADP + H(+). The enzyme catalyses L-threonyl-[protein] + ATP = O-phospho-L-threonyl-[protein] + ADP + H(+). Activated by phosphorylation on Thr-211. Inhibited by phosphorylation on Thr-617. Serine/threonine-protein kinase. Involved in the specific phosphorylation of microtubule-associated proteins for MAP2 and MAP4. Phosphorylates the microtubule-associated protein MAPT/TAU. Phosphorylates CDC25C on 'Ser-216'. Regulates localization and activity of some histone deacetylases by mediating phosphorylation of HDAC7, promoting subsequent interaction between HDAC7 and 14-3-3 and export from the nucleus. Regulates localization and activity of MITF by mediating its phosphorylation, promoting subsequent interaction between MITF and 14-3-3 and retention in the cytosol. Negatively regulates the Hippo signaling pathway and antagonizes the phosphorylation of LATS1. Cooperates with DLG5 to inhibit the kinase activity of STK3/MST2 toward LATS1. Phosphorylates PKP2 and KSR1. This chain is MAP/microtubule affinity-regulating kinase 3 (Mark3), found in Rattus norvegicus (Rat).